The following is a 650-amino-acid chain: Macrolide export ATP-binding/permease protein MacB (650 aa).

The ABC transporter domain occupies 2 to 238 (IDIKGIRKSY…PTTAQEKRQE (237 aa)). 38-45 (GPSGSGKS) provides a ligand contact to ATP. The next 4 helical transmembrane spans lie at 267–287 (GLSMLGILIGVAAVVGMLALG), 531–551 (IAAISLVVGGIGIMNIMLVSV), 580–600 (IVVSVCGGLLGIALGVGFSLL), and 610–630 (VVSAGSVILSFGFSALIGIVF).

Belongs to the ABC transporter superfamily. Macrolide exporter (TC 3.A.1.122) family. In terms of assembly, homodimer.

Its subcellular location is the cell inner membrane. Functionally, non-canonical ABC transporter that contains transmembrane domains (TMD), which form a pore in the inner membrane, and an ATP-binding domain (NBD), which is responsible for energy generation. Confers resistance against macrolides. The chain is Macrolide export ATP-binding/permease protein MacB from Bdellovibrio bacteriovorus (strain ATCC 15356 / DSM 50701 / NCIMB 9529 / HD100).